The following is a 137-amino-acid chain: MKSLGRHIIAEFYDCDKEMLDNIDAIEFHMKQAAYETGATIVNSSFHRFLPYGVSGVVVISESHLTIHTWPEYGYAAVDLFTCGDHVDPWKAFSYLKKIFKSQRAHVVEHLRGKYDEVGIPENAPHKAVEAEMAEIF.

The active-site Schiff-base intermediate with substrate; via pyruvic acid is Ser63. Ser63 bears the Pyruvic acid (Ser); by autocatalysis mark. The active-site Proton acceptor; for processing activity is the His68. The Proton donor; for catalytic activity role is filled by Cys83.

It belongs to the prokaryotic AdoMetDC family. Type 1 subfamily. As to quaternary structure, heterotetramer of two alpha and two beta chains arranged as a dimer of alpha/beta heterodimers. Requires pyruvate as cofactor. In terms of processing, is synthesized initially as an inactive proenzyme. Formation of the active enzyme involves a self-maturation process in which the active site pyruvoyl group is generated from an internal serine residue via an autocatalytic post-translational modification. Two non-identical subunits are generated from the proenzyme in this reaction, and the pyruvate is formed at the N-terminus of the alpha chain, which is derived from the carboxyl end of the proenzyme. The post-translation cleavage follows an unusual pathway, termed non-hydrolytic serinolysis, in which the side chain hydroxyl group of the serine supplies its oxygen atom to form the C-terminus of the beta chain, while the remainder of the serine residue undergoes an oxidative deamination to produce ammonia and the pyruvoyl group blocking the N-terminus of the alpha chain.

It catalyses the reaction S-adenosyl-L-methionine + H(+) = S-adenosyl 3-(methylsulfanyl)propylamine + CO2. It functions in the pathway amine and polyamine biosynthesis; S-adenosylmethioninamine biosynthesis; S-adenosylmethioninamine from S-adenosyl-L-methionine: step 1/1. Its function is as follows. Catalyzes the decarboxylation of S-adenosylmethionine to S-adenosylmethioninamine (dcAdoMet), the propylamine donor required for the synthesis of the polyamines spermine and spermidine from the diamine putrescine. In Fervidobacterium nodosum (strain ATCC 35602 / DSM 5306 / Rt17-B1), this protein is S-adenosylmethionine decarboxylase proenzyme.